Consider the following 640-residue polypeptide: 1-deoxy-D-xylulose-5-phosphate synthase (640 aa).

Thiamine diphosphate contacts are provided by residues His-75 and 117–119 (GHA). Mg(2+) is bound at residue Asp-146. Residues 147 to 148 (AA), Asn-175, and Glu-370 contribute to the thiamine diphosphate site. Asn-175 is a Mg(2+) binding site.

Belongs to the transketolase family. DXPS subfamily. As to quaternary structure, homodimer. The cofactor is Mg(2+). It depends on thiamine diphosphate as a cofactor.

The enzyme catalyses D-glyceraldehyde 3-phosphate + pyruvate + H(+) = 1-deoxy-D-xylulose 5-phosphate + CO2. The protein operates within metabolic intermediate biosynthesis; 1-deoxy-D-xylulose 5-phosphate biosynthesis; 1-deoxy-D-xylulose 5-phosphate from D-glyceraldehyde 3-phosphate and pyruvate: step 1/1. Catalyzes the acyloin condensation reaction between C atoms 2 and 3 of pyruvate and glyceraldehyde 3-phosphate to yield 1-deoxy-D-xylulose-5-phosphate (DXP). The sequence is that of 1-deoxy-D-xylulose-5-phosphate synthase from Chlamydia trachomatis serovar L2 (strain ATCC VR-902B / DSM 19102 / 434/Bu).